A 447-amino-acid chain; its full sequence is Argininosuccinate lyase (447 aa).

It belongs to the lyase 1 family. Argininosuccinate lyase subfamily.

The protein localises to the cytoplasm. It catalyses the reaction 2-(N(omega)-L-arginino)succinate = fumarate + L-arginine. It functions in the pathway amino-acid biosynthesis; L-arginine biosynthesis; L-arginine from L-ornithine and carbamoyl phosphate: step 3/3. The polypeptide is Argininosuccinate lyase (Bacteroides fragilis (strain ATCC 25285 / DSM 2151 / CCUG 4856 / JCM 11019 / LMG 10263 / NCTC 9343 / Onslow / VPI 2553 / EN-2)).